Reading from the N-terminus, the 328-residue chain is Tetraacyldisaccharide 4'-kinase (328 aa).

An ATP-binding site is contributed by 55–62 (TAGGNGKT).

Belongs to the LpxK family.

It catalyses the reaction a lipid A disaccharide + ATP = a lipid IVA + ADP + H(+). Its pathway is glycolipid biosynthesis; lipid IV(A) biosynthesis; lipid IV(A) from (3R)-3-hydroxytetradecanoyl-[acyl-carrier-protein] and UDP-N-acetyl-alpha-D-glucosamine: step 6/6. In terms of biological role, transfers the gamma-phosphate of ATP to the 4'-position of a tetraacyldisaccharide 1-phosphate intermediate (termed DS-1-P) to form tetraacyldisaccharide 1,4'-bis-phosphate (lipid IVA). This Escherichia coli (strain SMS-3-5 / SECEC) protein is Tetraacyldisaccharide 4'-kinase.